The chain runs to 150 residues: Small ribosomal subunit protein uS13 (150 aa).

The disordered stretch occupies residues 131–150; that stretch reads QRTKSTFRRGPTVGVSRRKK.

Belongs to the universal ribosomal protein uS13 family. As to quaternary structure, part of the 30S ribosomal subunit. Forms a loose heterodimer with protein S19. Forms two bridges to the 50S subunit in the 70S ribosome.

Located at the top of the head of the 30S subunit, it contacts several helices of the 16S rRNA. In the 70S ribosome it contacts the 23S rRNA (bridge B1a) and protein L5 of the 50S subunit (bridge B1b), connecting the 2 subunits; these bridges are implicated in subunit movement. The chain is Small ribosomal subunit protein uS13 from Methanocaldococcus jannaschii (strain ATCC 43067 / DSM 2661 / JAL-1 / JCM 10045 / NBRC 100440) (Methanococcus jannaschii).